Here is a 186-residue protein sequence, read N- to C-terminus: Probable GTP-binding protein EngB (186 aa).

In terms of domain architecture, EngB-type G spans D18–L186. GTP is bound by residues G26–S33, G52–L56, D69–G72, N135–D138, and V166–A168. Residues S33 and T54 each coordinate Mg(2+).

Belongs to the TRAFAC class TrmE-Era-EngA-EngB-Septin-like GTPase superfamily. EngB GTPase family. It depends on Mg(2+) as a cofactor.

Necessary for normal cell division and for the maintenance of normal septation. The polypeptide is Probable GTP-binding protein EngB (Malacoplasma penetrans (strain HF-2) (Mycoplasma penetrans)).